We begin with the raw amino-acid sequence, 443 residues long: Glutamyl-tRNA reductase (443 aa).

Residues 49-52 (TCNR), Ser109, 114-116 (ETQ), and Gln120 each bind substrate. The Nucleophile role is filled by Cys50. 189–194 (GAGEMS) is a binding site for NADP(+).

The protein belongs to the glutamyl-tRNA reductase family. As to quaternary structure, homodimer.

It catalyses the reaction (S)-4-amino-5-oxopentanoate + tRNA(Glu) + NADP(+) = L-glutamyl-tRNA(Glu) + NADPH + H(+). Its pathway is porphyrin-containing compound metabolism; protoporphyrin-IX biosynthesis; 5-aminolevulinate from L-glutamyl-tRNA(Glu): step 1/2. Its function is as follows. Catalyzes the NADPH-dependent reduction of glutamyl-tRNA(Glu) to glutamate 1-semialdehyde (GSA). The polypeptide is Glutamyl-tRNA reductase (Desulfitobacterium hafniense (strain DSM 10664 / DCB-2)).